Here is a 1883-residue protein sequence, read N- to C-terminus: DDB1- and CUL4-associated factor homolog 1 (1883 aa).

Disordered regions lie at residues methionine 1–glutamate 47 and lysine 309–alanine 340. The segment covering asparagine 37–glutamate 47 has biased composition (acidic residues). Basic and acidic residues predominate over residues lysine 309–arginine 322. A compositionally biased stretch (basic residues) spans histidine 323–glycine 334. Serine 349 carries the post-translational modification Phosphoserine. The disordered stretch occupies residues asparagine 882–serine 924. Over residues glutamine 888 to glutamine 917 the composition is skewed to polar residues. The region spanning aspartate 1087–proline 1119 is the LisH domain. Disordered stretches follow at residues threonine 1157–serine 1202, proline 1214–glutamine 1260, and serine 1310–arginine 1377. Low complexity predominate over residues leucine 1238–glutamine 1251. The span at serine 1310–asparagine 1329 shows a compositional bias: basic and acidic residues. Positions serine 1330–serine 1362 are enriched in polar residues. WD repeat units follow at residues aspartate 1464–serine 1503, glycine 1506–arginine 1546, serine 1548–proline 1586, cysteine 1587–proline 1626, and aspartate 1633–leucine 1671. Short sequence motifs (DWD box) lie at residues valine 1619–proline 1626 and glutamate 1655–phenylalanine 1662. The disordered stretch occupies residues tyrosine 1763 to serine 1883. Acidic residues-rich tracts occupy residues aspartate 1773 to leucine 1796 and aspartate 1808 to methionine 1864.

This sequence belongs to the VPRBP/DCAF1 family. Component of the CUL4-RBX1-DDB1-DCAF1 E3 ubiquitin-protein ligase complex. Interacts with DDB1A through its DWD motifs. Ubiquitous but predominantly expressed in the inflorescence and roots.

The protein resides in the nucleus. Its pathway is protein modification; protein ubiquitination. Functionally, component of the CUL4-RBX1-DDB1-DCAF1 E3 ubiquitin-protein ligase complex, DCAF1 may function as the substrate recognition module within this complex. Appears to be required for plant embryogenesis and to affect several other developmental processes including leaf, shoot, and flower development. In Arabidopsis thaliana (Mouse-ear cress), this protein is DDB1- and CUL4-associated factor homolog 1 (DCAF1).